Here is a 1461-residue protein sequence, read N- to C-terminus: DNA topoisomerase 2 (1461 aa).

Residues 1–17 (MSESESDYFTDGSEDDF) are compositionally biased toward acidic residues. The interval 1-61 (MSESESDYFT…TPKPTNASET (61 aa)) is disordered. Residues 41–52 (TNSTVSSSRSST) are compositionally biased toward low complexity. ATP-binding positions include N120, N149, 177–179 (SSN), and 190–197 (GRNGFGAK). Positions 382–389 (SKKEKGKK) are interaction with DNA. 418 to 420 (QTK) contacts ATP. A Toprim domain is found at 498-614 (CTLILTEGLS…GLLDIPGFLL (117 aa)). E504, D583, and D585 together coordinate Mg(2+). Residues 752-1226 (IPSVLDGFKP…SAKDLWNQDL (475 aa)) enclose the Topo IIA-type catalytic domain. The active-site O-(5'-phospho-DNA)-tyrosine intermediate is the Y842. The interval 1024 to 1033 (KLVSSLSLAN) is interaction with DNA. 2 disordered regions span residues 1122–1155 (DGKP…DVGN) and 1244–1461 (RESL…IVDE). Over residues 1133–1153 (LTGDDADEEEETQEQEGDEDV) the composition is skewed to acidic residues. Positions 1251–1261 (GKKKSTKRRAK) are enriched in basic residues. 2 stretches are compositionally biased toward basic and acidic residues: residues 1274–1283 (VKVEPKEKKS) and 1406–1417 (DKPEPKERRTRE). Over residues 1434–1461 (DSDDEDEDEEDDIVMSDGDDDDDFIVDE) the composition is skewed to acidic residues.

It belongs to the type II topoisomerase family. In terms of assembly, homodimer. The cofactor is Mg(2+). Mn(2+) is required as a cofactor. Ca(2+) serves as cofactor.

It is found in the nucleus. It catalyses the reaction ATP-dependent breakage, passage and rejoining of double-stranded DNA.. Its function is as follows. Control of topological states of DNA by transient breakage and subsequent rejoining of DNA strands. Topoisomerase II makes double-strand breaks. The polypeptide is DNA topoisomerase 2 (TOP2) (Candida albicans (Yeast)).